We begin with the raw amino-acid sequence, 479 residues long: U2 small nuclear ribonucleoprotein auxiliary factor 35 kDa subunit-related protein 1 (479 aa).

Residues 1–63 (MAALEKMTFP…EDTFIEEQQL (63 aa)) are disordered. The span at 20–37 (SHKKYRAALKKEKRKKRR) shows a compositional bias: basic residues. Acidic residues predominate over residues 50-63 (QEEEEDTFIEEQQL). Residue Lys67 forms a Glycyl lysine isopeptide (Lys-Gly) (interchain with G-Cter in SUMO2) linkage. Residues 171–199 (EKDRANCPFYSKTGACRFGDRCSRKHNFP) form a C3H1-type 1 zinc finger. Residues 203–309 (PTLLIKSMFT…RQLQCEFCPV (107 aa)) form the RRM domain. Residues 311–338 (RWKMAICGLFEIQQCPRGKHCNFLHVFR) form a C3H1-type 2 zinc finger. Ser354 carries the phosphoserine modification. Residues 356–479 (DQTGSSFGKN…DRTVQSPQSK (124 aa)) are disordered. 2 stretches are compositionally biased toward basic and acidic residues: residues 365–379 (NSER…DHYY) and 388–403 (PSPD…SERK). Position 389 is a phosphoserine (Ser389). 2 stretches are compositionally biased toward basic residues: residues 404–417 (KSSH…KRTS) and 442–451 (SQSRRSHRSR).

The protein resides in the nucleus. This Homo sapiens (Human) protein is U2 small nuclear ribonucleoprotein auxiliary factor 35 kDa subunit-related protein 1.